The chain runs to 572 residues: Urease subunit alpha (572 aa).

The region spanning 133–572 is the Urease domain; it reads GGIDLHVHYI…TSLSQRYFLF (440 aa). Residues His138, His140, and Lys221 each contribute to the Ni(2+) site. An N6-carboxylysine modification is found at Lys221. His223 contacts substrate. Residues His250 and His276 each coordinate Ni(2+). The Proton donor role is filled by His324. Ni(2+) is bound at residue Asp364.

This sequence belongs to the metallo-dependent hydrolases superfamily. Urease alpha subunit family. Heterotrimer of UreA (gamma), UreB (beta) and UreC (alpha) subunits. Three heterotrimers associate to form the active enzyme. The cofactor is Ni cation. In terms of processing, carboxylation allows a single lysine to coordinate two nickel ions.

It is found in the cytoplasm. It carries out the reaction urea + 2 H2O + H(+) = hydrogencarbonate + 2 NH4(+). It functions in the pathway nitrogen metabolism; urea degradation; CO(2) and NH(3) from urea (urease route): step 1/1. The polypeptide is Urease subunit alpha (Streptococcus thermophilus (strain CNRZ 1066)).